The primary structure comprises 1032 residues: Toll-like receptor 9 (1032 aa).

The signal sequence occupies residues 1–25; that stretch reads MVLRRRTLHPLSLLVQAAVLAETLA. Residues 26-818 lie on the Extracellular side of the membrane; the sequence is LGTLPAFLPC…LCLDEVLSWD (793 aa). An intrachain disulfide couples cysteine 35 to cysteine 45. 47-51 is a DNA binding site; sequence WLFLK. LRR repeat units lie at residues 62 to 85, 87 to 110, 122 to 147, 150 to 166, 167 to 190, 198 to 221, 223 to 242, 243 to 268, 283 to 306, 308 to 332, 333 to 356, 363 to 386, 390 to 413, 415 to 440, 471 to 495, 497 to 520, 521 to 544, 546 to 573, 575 to 599, 601 to 623, 628 to 651, 653 to 676, 677 to 700, 702 to 724, 725 to 748, and 750 to 773; these read CSNI…DFVH, SNLR…HFSC, MRTL…SLVN, LSHT…LAGL, YSLR…AVKV, LSNL…LPPS, EYLL…DLAN, LTSL…CIEC, LSHL…WFQG, VNLS…AFQN, LTRL…RLHL, LVSL…TLRW, LPKL…IFGT, RALR…TPEE, CKNF…MFVN, SRLQ…QFLP, LTNL…SFSE, PQLQ…SFVT, LSML…LNSN, VRFL…LYLH, LSGL…NLDN, PKSL…SLSF, LPNL…TLPN, TLLQ…FFAL, AVEL…WFGP, and VMNL…AFVD. N-linked (GlcNAc...) asparagine glycosylation is present at asparagine 64. Residues 72-77 and 95-109 each bind DNA; these read SNRIHH and KWNC…LHFS. The cysteines at positions 98 and 110 are disulfide-linked. A glycan (N-linked (GlcNAc...) asparagine) is linked at asparagine 129. Tyrosine 132 provides a ligand contact to DNA. N-linked (GlcNAc...) asparagine glycosylation occurs at asparagine 147. Cysteines 178 and 184 form a disulfide. 179–181 is a DNA binding site; it reads YYK. A glycan (N-linked (GlcNAc...) asparagine) is linked at asparagine 200. Tyrosine 208 contacts DNA. N-linked (GlcNAc...) asparagine glycans are attached at residues asparagine 210 and asparagine 242. 2 disulfide bridges follow: cysteine 255/cysteine 268 and cysteine 258/cysteine 265. Residues cysteine 258 and cysteine 265 are each lipidated (S-palmitoyl cysteine). 4 N-linked (GlcNAc...) asparagine glycosylation sites follow: asparagine 300, asparagine 309, asparagine 332, and asparagine 340. The interval 430–462 is disordered; the sequence is PSTLSEATPEEADDAEQEELLSADPHPAPLSTP. Over residues 437 to 450 the composition is skewed to acidic residues; it reads TPEEADDAEQEELL. An intrachain disulfide couples cysteine 471 to cysteine 501. 2 N-linked (GlcNAc...) asparagine glycosylation sites follow: asparagine 495 and asparagine 514. N-linked (GlcNAc...) asparagine glycosylation is present at asparagine 568. N-linked (GlcNAc...) asparagine glycans are attached at residues asparagine 670, asparagine 695, and asparagine 700. 2 N-linked (GlcNAc...) asparagine glycosylation sites follow: asparagine 732 and asparagine 752. 2 disulfide bridges follow: cysteine 765/cysteine 791 and cysteine 767/cysteine 810. The helical transmembrane segment at 819–839 threads the bilayer; it reads CFGLSLLAVAVGMVVPILHHL. Over 840–1032 the chain is Cytoplasmic; the sequence is CGWDVWYCFH…QNFCRGPTAE (193 aa). The TIR domain maps to 868–1013; the sequence is LPYDAFVVFD…GFWAQLSTAL (146 aa).

This sequence belongs to the Toll-like receptor family. Monomer and homodimer. Exists as a monomer in the absence of unmethylated cytidine-phosphate-guanosine (CpG) ligand. Proteolytic processing of an insertion loop (Z-loop) is required for homodimerization upon binding to the unmethylated CpG ligand leading to its activation. Interacts with MYD88 via their respective TIR domains. Interacts with BTK. Interacts (via transmembrane domain) with UNC93B1. Interacts with CD300LH; the interaction may promote full activation of TLR9-triggered innate responses. Interacts with CNPY3 and HSP90B1; this interaction is required for proper folding in the endoplasmic reticulum. Interacts with SMPDL3B. Interacts with CD82; this interaction is essential for TLR9-dependent myddosome formation in response to CpG stimulation. Activated by proteolytic cleavage of the flexible loop between repeats LRR14 and LRR15 within the ectodomain. Cleavage requires UNC93B1. Proteolytically processed by first removing the majority of the ectodomain by either asparagine endopeptidase (AEP) or a cathepsin followed by a trimming event that is solely cathepsin mediated and required for optimal receptor signaling. Post-translationally, palmitoylated by ZDHHC3 in the Golgi regulates TLR9 trafficking from the Golgi to endosomes. Depalmitoylation by PPT1 controls the release of TLR9 from UNC93B1 in endosomes. As to expression, expressed in the basolateral region of gastric epithelial cells with high levels detected in antrum and body mucosa (at protein level). Detected in spleen and stomach at higher levels in C57BL/6 mice than BALB/C.

It localises to the endoplasmic reticulum membrane. The protein localises to the endosome. The protein resides in the lysosome. It is found in the cytoplasmic vesicle. Its subcellular location is the phagosome. Its function is as follows. Key component of innate and adaptive immunity. TLRs (Toll-like receptors) control host immune response against pathogens through recognition of molecular patterns specific to microorganisms. TLR9 is a nucleotide-sensing TLR which is activated by unmethylated cytidine-phosphate-guanosine (CpG) dinucleotides. Acts via MYD88 and TRAF6, leading to NF-kappa-B activation, cytokine secretion and the inflammatory response. Plays a role in defense against systemic mouse cytomegalovirus infection. Controls lymphocyte response to Helicobacter infection. Upon CpG stimulation, induces B-cell proliferation, activation, survival and antibody production. In Mus musculus (Mouse), this protein is Toll-like receptor 9 (Tlr9).